Reading from the N-terminus, the 287-residue chain is ATP synthase gamma chain (287 aa).

The protein belongs to the ATPase gamma chain family. In terms of assembly, F-type ATPases have 2 components, CF(1) - the catalytic core - and CF(0) - the membrane proton channel. CF(1) has five subunits: alpha(3), beta(3), gamma(1), delta(1), epsilon(1). CF(0) has three main subunits: a, b and c.

It is found in the cell inner membrane. Its function is as follows. Produces ATP from ADP in the presence of a proton gradient across the membrane. The gamma chain is believed to be important in regulating ATPase activity and the flow of protons through the CF(0) complex. The protein is ATP synthase gamma chain of Cronobacter sakazakii (strain ATCC BAA-894) (Enterobacter sakazakii).